A 543-amino-acid polypeptide reads, in one-letter code: Intermediate filament protein ifb-2 (543 aa).

Positions 1-10 (MSAVSYSMHR) are enriched in polar residues. Residues 1-27 (MSAVSYSMHRTTTTTSSSSHGGVSAGH) form a disordered region. The tract at residues 1 to 42 (MSAVSYSMHRTTTTTSSSSHGGVSAGHAAEEFVASAEREKQE) is head. An IF rod domain is found at 39-388 (EKQEMQQLNS…KLVESEEGRF (350 aa)). Residues 43-74 (MQQLNSRLEVYISRVRQLEDRNKELVIELDTL) are coil 1A. A linker 1 region spans residues 75-88 (RGSLGNDIGQIKFK). The interval 89-223 (FNDSLVKVRR…RIHSQEITEL (135 aa)) is coil 1B. Positions 224-240 (RTLLAQAPADTREFFKN) are linker 12. Positions 241 to 387 (ELALAIREIK…RKLVESEEGR (147 aa)) are coil 2. A tail region spans residues 388 to 542 (FTHVGQGVVV…SHIQTTVASS (155 aa)). The LTD domain occupies 420 to 538 (TRSSFKRHAK…IEKASHIQTT (119 aa)).

This sequence belongs to the intermediate filament family. Expression is restricted to a discrete circumferential subapical layer within the intestinal terminal web (known as the 'endotube'); this layer joins directly to the apical junction complexes that connect adjacent gut cells.

It localises to the cytoplasm. Its function is as follows. Cytoplasmic intermediate filaments provide mechanical strength to cells. Not essential protein. Component of the terminal web (organelle-depleted, intermediate filament-rich layer of cytoplasm that underlies the apical microvilli of polarized epithelial cells) in embryonic through to adult gut cells. Correct localization of filaments requires let-413. This chain is Intermediate filament protein ifb-2 (ifb-2), found in Caenorhabditis elegans.